A 1241-amino-acid chain; its full sequence is Putative urea carboxylase (1241 aa).

One can recognise a Biotin carboxylation domain in the interval Ala-3 to Tyr-459. ATP contacts are provided by Lys-117 and Glu-201. In terms of domain architecture, ATP-grasp spans Arg-121–Asp-321. A Biotinyl-binding domain is found at Glu-1159–Arg-1239. The residue at position 1202 (Lys-1202) is an N6-biotinyllysine.

Biotin is required as a cofactor.

The catalysed reaction is urea + hydrogencarbonate + ATP = urea-1-carboxylate + ADP + phosphate + H(+). Its function is as follows. Involved in the utilization of lactams. Required for the conversion of exogenous 2-pyrrolidinone (gamma-butyrolactam) to endogenous gamma-amino-n-butyrate (GABA). This Emericella nidulans (strain FGSC A4 / ATCC 38163 / CBS 112.46 / NRRL 194 / M139) (Aspergillus nidulans) protein is Putative urea carboxylase (lamA).